The sequence spans 350 residues: Ion-translocating oxidoreductase complex subunit D (350 aa).

The next 4 membrane-spanning stretches (helical) occupy residues 20–40 (IMLLVLLAAVPGIVVQTWFFG), 42–62 (GTVLQIVLAALTAWATEAAIL), 89–109 (IPPLAPWWMVVLGTAFAVVIA), and 123–143 (PAMIGYVVLLISFPVQMTSWL). Threonine 187 is subject to FMN phosphoryl threonine. The next 5 helical transmembrane spans lie at 214-234 (VLAGLGWQWVNIAWLAGGLFL), 242-262 (WHIPVSFLLSLGLCATLGWLF), 267-287 (LASPQMHLFSGATMLGAFFIL), 301-321 (LIFGALAGLLVWLIRSFGGYP), and 322-342 (DGVAFAVLLANITVPLIDYYT).

The protein belongs to the NqrB/RnfD family. In terms of assembly, the complex is composed of six subunits: RnfA, RnfB, RnfC, RnfD, RnfE and RnfG. FMN serves as cofactor.

The protein localises to the cell inner membrane. In terms of biological role, part of a membrane-bound complex that couples electron transfer with translocation of ions across the membrane. In Klebsiella pneumoniae (strain 342), this protein is Ion-translocating oxidoreductase complex subunit D.